The sequence spans 167 residues: Probable D-lyxose ketol-isomerase (167 aa).

Residues His-69, His-71, Glu-82, and His-137 each coordinate Mn(2+).

This sequence belongs to the D-lyxose ketol-isomerase family. In terms of assembly, homodimer. Requires Mn(2+) as cofactor.

The catalysed reaction is D-lyxose = D-xylulose. Sugar isomerase that catalyzes the reversible isomerization of D-lyxose to D-xylulose. The polypeptide is Probable D-lyxose ketol-isomerase (ydaE) (Bacillus subtilis (strain 168)).